Reading from the N-terminus, the 434-residue chain is MTYNQTRSQEAFEQARPLMPGGVNSPVRAYKSVGMTPIFAERGEGSRVYDIDGNEYIDYVLSWGPLILGHRDPVVTKAIQEQAEKGWTFGTPTELETKMAELVIDRVPSIEMVRMVNSGTEATMAALRLARGYTGKTKILKFEGCYHGHGDSLLIKAGSGVATLGLPDSPGVPKELASHTLTVPYNDLDAVRVAFEKYGDDLAGVIVEPAAGNMGFVPPQPGFLEGLREITEQNGALLIFDEVMTGFRVGYNCAQGYFGVTPDLTCLGKVIGGGLPVGAYGGKREIMEQIAPQGPIYQAGTLSGNPLAMIAGYTTLSQLKPEHYEEFERKADRLAEGFTQAGEKYNIPHDTNRAGSMFGFFFTNEKVTNFEKAKSANLEMFRSYYQKMAARGVFLPPSQFEGLFLSTAHTDEDIEKTIAAVEATFKELQEEFSL.

Lys269 is modified (N6-(pyridoxal phosphate)lysine).

This sequence belongs to the class-III pyridoxal-phosphate-dependent aminotransferase family. HemL subfamily. In terms of assembly, homodimer. The cofactor is pyridoxal 5'-phosphate.

Its subcellular location is the cytoplasm. The catalysed reaction is (S)-4-amino-5-oxopentanoate = 5-aminolevulinate. The protein operates within porphyrin-containing compound metabolism; protoporphyrin-IX biosynthesis; 5-aminolevulinate from L-glutamyl-tRNA(Glu): step 2/2. The sequence is that of Glutamate-1-semialdehyde 2,1-aminomutase 2 from Exiguobacterium sp. (strain ATCC BAA-1283 / AT1b).